Here is a 486-residue protein sequence, read N- to C-terminus: Monocarboxylate transporter 12 (486 aa).

Residues 1 to 9 (MTKITRVSL) are Cytoplasmic-facing. 12 helical membrane passes run 10 to 30 (ASPP…LVTI), 58 to 78 (AWIH…GSVV), 86 to 106 (AGIM…SFAT), 115 to 135 (LGVL…AMVG), 148 to 168 (IAMS…QLLI), 177 to 197 (LLIL…MRPI), 253 to 273 (FVVL…LFVY), 289 to 309 (AFLM…FGWL), 320 to 340 (YVCY…LPML), 353 to 373 (FGYF…EIVG), 383 to 403 (VVYF…GWLV), and 410 to 430 (TAAF…LGFV). Topologically, residues 431–486 (RIVKRMKRTQVPFPVKDSDPKLQLWTNGSVAYSVARELDQKDEEPLPKARSGCNLT) are cytoplasmic.

It belongs to the major facilitator superfamily. Monocarboxylate porter (TC 2.A.1.13) family. As to quaternary structure, interacts with isoform 2 of BSG; this interaction is required for its localization to the plasma membrane. As to expression, highly expressed in the lung, liver, kidney, and pancreas. Expressed in eye lens.

It is found in the cell membrane. The protein resides in the basolateral cell membrane. The catalysed reaction is creatine(in) = creatine(out). It catalyses the reaction guanidinoacetate(in) = guanidinoacetate(out). Creatine uptake is inhibited by carbonyl cyanide 3-chlorophenylhydrazone (CCCP) and by valinomycin. Functions as a transporter for creatine and as well for its precursor guanidinoacetate. Transport of creatine and GAA is independent of resting membrane potential and extracellular Na(+), Cl(-), or pH. Contributes to the process of creatine biosynthesis and distribution. The chain is Monocarboxylate transporter 12 from Mus musculus (Mouse).